Here is a 430-residue protein sequence, read N- to C-terminus: Protein translocase subunit SecY (430 aa).

10 helical membrane passes run 18-38 (VIFT…PVPG), 67-87 (FSIF…MQLL), 118-138 (IVLG…FFPG), 145-165 (VSVY…LMWL), 177-197 (GISI…LNLI), 213-233 (IVVI…VIFV), 270-290 (VIPV…AGLF), 309-329 (PIGM…YTFI), 369-389 (FVGS…IKFA), and 390-410 (DLPQ…GVAL).

Belongs to the SecY/SEC61-alpha family. As to quaternary structure, component of the Sec protein translocase complex. Heterotrimer consisting of SecY, SecE and SecG subunits. The heterotrimers can form oligomers, although 1 heterotrimer is thought to be able to translocate proteins. Interacts with the ribosome. Interacts with SecDF, and other proteins may be involved. Interacts with SecA.

It localises to the cell membrane. Functionally, the central subunit of the protein translocation channel SecYEG. Consists of two halves formed by TMs 1-5 and 6-10. These two domains form a lateral gate at the front which open onto the bilayer between TMs 2 and 7, and are clamped together by SecE at the back. The channel is closed by both a pore ring composed of hydrophobic SecY resides and a short helix (helix 2A) on the extracellular side of the membrane which forms a plug. The plug probably moves laterally to allow the channel to open. The ring and the pore may move independently. This chain is Protein translocase subunit SecY, found in Halalkalibacterium halodurans (strain ATCC BAA-125 / DSM 18197 / FERM 7344 / JCM 9153 / C-125) (Bacillus halodurans).